The following is a 194-amino-acid chain: Fe/S biogenesis protein NfuA (194 aa).

[4Fe-4S] cluster-binding residues include cysteine 152 and cysteine 155.

The protein belongs to the NfuA family. As to quaternary structure, homodimer. [4Fe-4S] cluster serves as cofactor.

Its function is as follows. Involved in iron-sulfur cluster biogenesis. Binds a 4Fe-4S cluster, can transfer this cluster to apoproteins, and thereby intervenes in the maturation of Fe/S proteins. Could also act as a scaffold/chaperone for damaged Fe/S proteins. The chain is Fe/S biogenesis protein NfuA from Ectopseudomonas mendocina (strain ymp) (Pseudomonas mendocina).